The chain runs to 1479 residues: Peroxidasin homolog (1479 aa).

The N-terminal stretch at 1 to 26 is a signal peptide; the sequence is MAKRSRGPGRRCLLALVLFCAWGTLA. Positions 27-63 constitute an LRRNT domain; it reads VVAQKPGAGCPSRCLCFRTTVRCMHLLLEAVPAVAPQ. 2 disulfide bridges follow: C36/C42 and C40/C49. LRR repeat units lie at residues 61–84, 85–108, 110–132, 133–156, 157–180, and 182–204; these read APQT…AFRR, LRNL…AFED, ENLK…AFKG, LASL…SFQH, LPKL…TFNH, and ESMK…LWLA. Residues 192–244 form the LRRCT domain; sequence NTLHCDCEILWLADLLKTYAESGNAQAAAICEYPRRIQGRSVATITPEELNCE. Disulfide bonds link C196/C243, C198/C222, C267/C317, C363/C412, C454/C502, and C546/C594. Ig-like C2-type domains are found at residues 246–332, 342–428, 433–520, and 521–610; these read PRIT…QEVT, PTFV…AFII, PQFT…LTVQ, and PRVT…MVLS. N640, N699, N719, and N731 each carry an N-linked (GlcNAc...) asparagine glycan. 4 disulfide bridges follow: C723-C885, C732-C748, C847-C857, and C851-C875. D826 provides a ligand contact to heme b. The active-site Proton acceptor is the H827. Position 828 (D828) interacts with Ca(2+). N865 carries an N-linked (GlcNAc...) asparagine glycan. Ca(2+)-binding residues include T907, Y909, D911, and S913. The cysteines at positions 959 and 970 are disulfide-linked. An N-linked (GlcNAc...) asparagine glycan is attached at N964. Heme b contacts are provided by E980 and H1074. One copy of the LRR 7 repeat lies at 1151-1175; sequence ALDLAAINIQRGRDHGIPPYHDYRV. Residue Y1176 is modified to Phosphotyrosine. Intrachain disulfides connect C1177–C1234 and C1275–C1301. An N-linked (GlcNAc...) asparagine glycan is attached at N1178. Residue S1180 is modified to Phosphoserine. One copy of the LRR 8 repeat lies at 1270 to 1291; it reads LARILCDNADNITRVQSDVFRV. N-linked (GlcNAc...) asparagine glycans are attached at residues N1280, N1368, and N1425. A required in homotrimerization region spans residues 1315–1411; the sequence is CCEDCRTRGQ…QIKKLESRLS (97 aa). A disordered region spans residues 1342-1380; that stretch reads YQEDKPTKKTRPRKIPSVGRQGEHLSNSTSAFSTRSDAS. Residues 1365-1380 are compositionally biased toward polar residues; sequence HLSNSTSAFSTRSDAS. A VWFC domain is found at 1413–1471; sequence TECVDAGGESHANNTKWKKDACTICECKDGQVTCFVEACPPATCAVPVNIPGACCPVCL.

The protein belongs to the peroxidase family. XPO subfamily. Homotrimer; disulfide-linked. The homotrimer form is predominant. Homooligomer; disulfide-linked. Oligomerization occurs intracellularly before C-terminal proteolytic cleavage. Interacts with PXDNL; this interaction inhibits the peroxidase activity of PXDN. It depends on Ca(2+) as a cofactor. Heme b serves as cofactor. In terms of processing, glycosylated. Four sites are completely N-glycosylated (Asn-640, Asn-731, Asn-865 and Asn-1425), whereas the others are found partially glycosylated. Post-translationally, processed by FURIN and the proteolytic processing largely depends on the peroxidase activity of PXDN. The proteolytic cleavage occurs after intracellular homotrimerization and releases into the extracellular matrix a large, catalytically active fragment and a smaller fragment consisting primarily of the C-terminal VWFC domain. The processing enhances both peroxidase activity and sulfilimine cross-links formation. Expressed at higher levels in heart, lung, ovary, spleen, intestine and placenta, and at lower levels in liver, colon, pancreas, kidney, thymus, skeletal muscle and prostate. Expressed in tumors such as melanoma, breast cancer, ovarian cancer and glioblastoma. A shorter form probably lacking the signal sequence is found in testis and in EB1 cells undergoing p53/TP53-dependent apoptosis.

It is found in the secreted. The protein localises to the extracellular space. The protein resides in the extracellular matrix. It localises to the endoplasmic reticulum. Its subcellular location is the cell surface. It is found in the basement membrane. It catalyses the reaction L-lysyl-[collagen] + L-methionyl-[collagen] + H2O2 = [collagen]-L-lysyl-N-S-L-methionyl-[collagen] + 2 H2O + H(+). The enzyme catalyses bromide + H2O2 = hypobromite + H2O. The catalysed reaction is L-lysyl-[collagen] + L-methionyl-[collagen] + hypobromite = [collagen]-L-lysyl-N-S-L-methionyl-[collagen] + bromide + H2O + H(+). It carries out the reaction L-tyrosyl-[protein] + bromide + H2O2 + H(+) = 3-bromo-L-tyrosyl-[protein] + 2 H2O. It catalyses the reaction hypobromite + L-tyrosyl-[protein] + H(+) = 3-bromo-L-tyrosyl-[protein] + H2O. Its activity is regulated as follows. The hypobromous acid formation is activated by increasing nitrite concentrations and inhibited by increasing urate concentrations. In terms of biological role, catalyzes the two-electron oxidation of bromide by hydrogen peroxide and generates hypobromite as a reactive intermediate which mediates the formation of sulfilimine cross-links between methionine and hydroxylysine residues within an uncross-linked collagen IV/COL4A1 NC1 hexamer. In turns, directly contributes to the collagen IV network-dependent fibronectin/FN and laminin assembly, which is required for full extracellular matrix (ECM)-mediated signaling. Thus, sulfilimine cross-links are essential for growth factor-induced cell proliferation and survival in endothelial cells, an event essential to basement membrane integrity. In addition, through the bromide oxidation, may promote tubulogenesis and induce angiogenesis through ERK1/2, Akt, and FAK pathways. Moreover brominates alpha2 collagen IV chain/COL4A2 at 'Tyr-1485' and leads to bromine enrichment of the basement membranes. In vitro, can also catalyze the two-electron oxidation of thiocyanate and iodide and these two substrates could effectively compete with bromide and thus inhibit the formation of sulfilimine bonds. Binds laminins. May play a role in the organization of eyeball structure and lens development during eye development. This Homo sapiens (Human) protein is Peroxidasin homolog.